We begin with the raw amino-acid sequence, 53 residues long: MKSNNKNLEIEIITIFYTNLISRTIYIPASSNSSGSSGLFASSGSFDSFGYFF.

This is an uncharacterized protein from Dictyostelium discoideum (Social amoeba).